The primary structure comprises 878 residues: Multiple C2 and transmembrane domain-containing protein 2 (878 aa).

2 disordered regions span residues 20-40 (LINLSKKKAKKSPSKPLDLRV) and 143-178 (KPSLGRDAPEEHDKTHGNDDLNASMTSQHFEEESTL). The segment covering 149–161 (DAPEEHDKTHGND) has biased composition (basic and acidic residues). C2 domains are found at residues 177–292 (TLGE…EHIL), 334–452 (SKSS…CLEL), and 486–607 (PSER…CYVL). The Ca(2+) site is built by Asp-210, Asp-216, Asp-263, Asp-265, and Asp-270. Ca(2+)-binding residues include Asp-525, Asp-531, Asp-577, Asp-579, and Asp-585. A helical transmembrane segment spans residues 694-714 (FVVFLVTVWNFELYMIPLALL). Residues 728-752 (KASSTQDSQESTDVEEEGKEEEKES) form a disordered region. Residues 737–746 (ESTDVEEEGK) are compositionally biased toward acidic residues. Residues 794–814 (PFLSLLACLILAITTVILYFI) traverse the membrane as a helical segment.

This sequence belongs to the MCTP family. The cofactor is Ca(2+).

Its subcellular location is the membrane. Its function is as follows. Might play a role in the development of cardiac outflow tract. This is Multiple C2 and transmembrane domain-containing protein 2 (Mctp2) from Mus musculus (Mouse).